Consider the following 465-residue polypeptide: Adenosylhomocysteinase (465 aa).

Substrate contacts are provided by T56, D131, and E191. 192-194 (TTT) contacts NAD(+). Substrate contacts are provided by K221 and D225. NAD(+)-binding positions include N226, 255-260 (GYGDVG), E278, N313, 334-336 (IGH), and N379.

It belongs to the adenosylhomocysteinase family. It depends on NAD(+) as a cofactor.

The protein resides in the cytoplasm. It carries out the reaction S-adenosyl-L-homocysteine + H2O = L-homocysteine + adenosine. The protein operates within amino-acid biosynthesis; L-homocysteine biosynthesis; L-homocysteine from S-adenosyl-L-homocysteine: step 1/1. In terms of biological role, may play a key role in the regulation of the intracellular concentration of adenosylhomocysteine. This chain is Adenosylhomocysteinase, found in Bartonella tribocorum (strain CIP 105476 / IBS 506).